A 110-amino-acid polypeptide reads, in one-letter code: Ferredoxin (110 aa).

2 4Fe-4S ferredoxin-type domains span residues 2–30 and 31–60; these read TYIV…YEGE and FMLV…PESP. The [3Fe-4S] cluster site is built by cysteine 9 and cysteine 17. Residues cysteine 21, cysteine 40, cysteine 43, and cysteine 46 each coordinate [4Fe-4S] cluster. Cysteine 50 is a binding site for [3Fe-4S] cluster.

[4Fe-4S] cluster is required as a cofactor. Requires [3Fe-4S] cluster as cofactor.

Functionally, ferredoxins are iron-sulfur proteins that transfer electrons in a wide variety of metabolic reactions. This Rickettsia typhi (strain ATCC VR-144 / Wilmington) protein is Ferredoxin (fdxA).